A 195-amino-acid chain; its full sequence is Probable GTP-binding protein EngB (195 aa).

Residues 24–195 (GLSEVGLSGR…QIWNVIEKYL (172 aa)) enclose the EngB-type G domain. Residues 32–39 (GRSNVGKS), 59–63 (GKTQT), 77–80 (DVPG), 144–147 (TKED), and 176–178 (YSS) each bind GTP. Residues serine 39 and threonine 61 each contribute to the Mg(2+) site.

The protein belongs to the TRAFAC class TrmE-Era-EngA-EngB-Septin-like GTPase superfamily. EngB GTPase family. It depends on Mg(2+) as a cofactor.

In terms of biological role, necessary for normal cell division and for the maintenance of normal septation. This chain is Probable GTP-binding protein EngB, found in Staphylococcus saprophyticus subsp. saprophyticus (strain ATCC 15305 / DSM 20229 / NCIMB 8711 / NCTC 7292 / S-41).